The sequence spans 129 residues: Glycine cleavage system H protein (129 aa).

The region spanning 24 to 106 (LFKIGVSEFA…IGDGWLLIIK (83 aa)) is the Lipoyl-binding domain. Lysine 65 carries the N6-lipoyllysine modification.

This sequence belongs to the GcvH family. In terms of assembly, the glycine cleavage system is composed of four proteins: P, T, L and H. (R)-lipoate serves as cofactor.

Its function is as follows. The glycine cleavage system catalyzes the degradation of glycine. The H protein shuttles the methylamine group of glycine from the P protein to the T protein. This is Glycine cleavage system H protein from Prochlorococcus marinus subsp. pastoris (strain CCMP1986 / NIES-2087 / MED4).